The following is a 220-amino-acid chain: Fructose-6-phosphate aldolase 1 (220 aa).

Lysine 85 acts as the Schiff-base intermediate with substrate in catalysis.

This sequence belongs to the transaldolase family. Type 3A subfamily. In terms of assembly, homodecamer.

It localises to the cytoplasm. The catalysed reaction is beta-D-fructose 6-phosphate = dihydroxyacetone + D-glyceraldehyde 3-phosphate. Its function is as follows. Catalyzes the reversible formation of fructose 6-phosphate from dihydroxyacetone and D-glyceraldehyde 3-phosphate via an aldolization reaction. The polypeptide is Fructose-6-phosphate aldolase 1 (fsaA) (Escherichia coli O157:H7).